The chain runs to 288 residues: Small ribosomal subunit protein uS2 (288 aa).

Positions 228-288 (RAGLSSDKDA…PAAEAPSTEA (61 aa)) are disordered. Residues 257–288 (QAAPAAEAAPAAEAQAAPAAEAPAAEAPSTEA) are compositionally biased toward low complexity.

It belongs to the universal ribosomal protein uS2 family.

The polypeptide is Small ribosomal subunit protein uS2 (Rhodococcus opacus (strain B4)).